The following is a 309-amino-acid chain: HPr kinase/phosphorylase (309 aa).

Active-site residues include histidine 138 and lysine 159. 153–160 (GQSGVGKS) is an ATP binding site. Serine 160 is a binding site for Mg(2+). The active-site Proton acceptor; for phosphorylation activity. Proton donor; for dephosphorylation activity is the aspartate 177. Positions 201–210 (LEIRGLGIIN) are important for the catalytic mechanism of both phosphorylation and dephosphorylation. A Mg(2+)-binding site is contributed by glutamate 202. The active site involves arginine 243. An important for the catalytic mechanism of dephosphorylation region spans residues 264–269 (PVRPGR).

It belongs to the HPrK/P family. Homohexamer. Mg(2+) serves as cofactor.

It catalyses the reaction [HPr protein]-L-serine + ATP = [HPr protein]-O-phospho-L-serine + ADP + H(+). The enzyme catalyses [HPr protein]-O-phospho-L-serine + phosphate + H(+) = [HPr protein]-L-serine + diphosphate. Catalyzes the ATP- as well as the pyrophosphate-dependent phosphorylation of a specific serine residue in HPr, a phosphocarrier protein of the phosphoenolpyruvate-dependent sugar phosphotransferase system (PTS). HprK/P also catalyzes the pyrophosphate-producing, inorganic phosphate-dependent dephosphorylation (phosphorolysis) of seryl-phosphorylated HPr (P-Ser-HPr). The two antagonistic activities of HprK/P are regulated by several intracellular metabolites, which change their concentration in response to the absence or presence of rapidly metabolisable carbon sources (glucose, fructose, etc.) in the growth medium. Also phosphorylates/dephosphorylates the HPr-like catabolite repression protein crh on a specific serine residue. Therefore, by controlling the phosphorylation state of HPr and crh, HPrK/P is a sensor enzyme that plays a major role in the regulation of carbon metabolism and sugar transport: it mediates carbon catabolite repression (CCR), and regulates PTS-catalyzed carbohydrate uptake and inducer exclusion. The chain is HPr kinase/phosphorylase from Bacillus cereus (strain B4264).